Reading from the N-terminus, the 231-residue chain is Histone H1 (231 aa).

Residues 1–17 (MSDPAIEVAPVPVASPA) show a composition bias toward low complexity. Disordered stretches follow at residues 1-44 (MSDP…PVSD) and 124-231 (TKKV…AKKA). Residues 38–112 (THPPVSDMIV…GASGSFKLPA (75 aa)) form the H15 domain. Basic residues-rich tracts occupy residues 145–171 (KVKKTIAKKPKVASATKIKKPVAKTTK), 178–213 (PTKKVAAKPKAAPKPKAAPKPKVAKPKKAAAPKAKK), and 221–231 (KAAKKPSAKKA).

This sequence belongs to the histone H1/H5 family.

It localises to the nucleus. The protein localises to the chromosome. Histones H1 are necessary for the condensation of nucleosome chains into higher-order structures. The sequence is that of Histone H1 from Chironomus thummi thummi (Midge).